The chain runs to 429 residues: Adenylosuccinate synthetase (429 aa).

GTP contacts are provided by residues 12-18 and 40-42; these read GDEGKGK and GHT. Aspartate 13 (proton acceptor) is an active-site residue. Residues aspartate 13 and glycine 40 each coordinate Mg(2+). IMP is bound by residues 13–16, 38–41, threonine 128, arginine 142, glutamine 223, threonine 238, and arginine 302; these read DEGK and NAGH. Histidine 41 functions as the Proton donor in the catalytic mechanism. 298 to 304 is a binding site for substrate; it reads TVTKRPR. Residues arginine 304, 330–332, and 412–414 contribute to the GTP site; these read CLD and SVG.

Belongs to the adenylosuccinate synthetase family. In terms of assembly, homodimer. Mg(2+) is required as a cofactor.

It localises to the cytoplasm. The catalysed reaction is IMP + L-aspartate + GTP = N(6)-(1,2-dicarboxyethyl)-AMP + GDP + phosphate + 2 H(+). The protein operates within purine metabolism; AMP biosynthesis via de novo pathway; AMP from IMP: step 1/2. In terms of biological role, plays an important role in the de novo pathway of purine nucleotide biosynthesis. Catalyzes the first committed step in the biosynthesis of AMP from IMP. In Lactiplantibacillus plantarum (strain ATCC BAA-793 / NCIMB 8826 / WCFS1) (Lactobacillus plantarum), this protein is Adenylosuccinate synthetase.